Reading from the N-terminus, the 359-residue chain is Fructose-bisphosphate aldolase (359 aa).

Ser-62 lines the D-glyceraldehyde 3-phosphate pocket. The Proton donor role is filled by Asp-109. Zn(2+)-binding residues include His-110, Asp-144, Glu-174, and His-226. Gly-227 lines the dihydroxyacetone phosphate pocket. His-265 serves as a coordination point for Zn(2+). Dihydroxyacetone phosphate-binding positions include 266–268 (GGS) and 287–290 (NLDT).

The protein belongs to the class II fructose-bisphosphate aldolase family. Homodimer. Requires Zn(2+) as cofactor.

Its subcellular location is the cytoplasm. The catalysed reaction is beta-D-fructose 1,6-bisphosphate = D-glyceraldehyde 3-phosphate + dihydroxyacetone phosphate. The protein operates within carbohydrate degradation; glycolysis; D-glyceraldehyde 3-phosphate and glycerone phosphate from D-glucose: step 4/4. In terms of biological role, catalyzes the aldol condensation of dihydroxyacetone phosphate (DHAP or glycerone-phosphate) with glyceraldehyde 3-phosphate (G3P) to form fructose 1,6-bisphosphate (FBP) in gluconeogenesis and the reverse reaction in glycolysis. In Candida albicans (strain SC5314 / ATCC MYA-2876) (Yeast), this protein is Fructose-bisphosphate aldolase (FBA1).